We begin with the raw amino-acid sequence, 267 residues long: Lyso-ornithine lipid O-acyltransferase (267 aa).

The chain crosses the membrane as a helical span at residues 7–27 (IFLVVAAMVALSLSLIPFQYL).

It belongs to the 1-acyl-sn-glycerol-3-phosphate acyltransferase family. OlsA subfamily.

The protein localises to the membrane. The enzyme catalyses a lyso-ornithine lipid + a fatty acyl-[ACP] = an N(2)-[(3R)-3-(acyloxy)acyl]-L-ornithine lipid + holo-[ACP]. Its pathway is lipid metabolism. Its function is as follows. Catalyzes the second step in the formation of ornithine lipids, which are phosphorus-free membrane lipids. Uses acyl-acyl carrier protein (acyl-AcpP) as an acyl donor and converts lyso-ornithine lipid (LOL) into ornithine lipid (OL). The protein is Lyso-ornithine lipid O-acyltransferase of Brucella abortus (strain 2308).